Here is a 483-residue protein sequence, read N- to C-terminus: Malonate-semialdehyde dehydrogenase 2 (483 aa).

Phenylalanine 152, lysine 176, glutamate 179, arginine 180, and serine 229 together coordinate NAD(+). Cysteine 284 (nucleophile) is an active-site residue. Glutamate 384 contacts NAD(+).

The protein belongs to the aldehyde dehydrogenase family. IolA subfamily. Homotetramer.

It catalyses the reaction 3-oxopropanoate + NAD(+) + CoA + H2O = hydrogencarbonate + acetyl-CoA + NADH + H(+). The enzyme catalyses 2-methyl-3-oxopropanoate + NAD(+) + CoA + H2O = propanoyl-CoA + hydrogencarbonate + NADH + H(+). It participates in polyol metabolism; myo-inositol degradation into acetyl-CoA; acetyl-CoA from myo-inositol: step 7/7. Functionally, catalyzes the oxidation of malonate semialdehyde (MSA) and methylmalonate semialdehyde (MMSA) into acetyl-CoA and propanoyl-CoA, respectively. Is involved in a myo-inositol catabolic pathway. Bicarbonate, and not CO2, is the end-product of the enzymatic reaction. The protein is Malonate-semialdehyde dehydrogenase 2 of Bacillus mycoides (strain KBAB4) (Bacillus weihenstephanensis).